An 81-amino-acid chain; its full sequence is Large ribosomal subunit protein bL31B (81 aa).

Belongs to the bacterial ribosomal protein bL31 family. Type B subfamily. As to quaternary structure, part of the 50S ribosomal subunit.

In Bdellovibrio bacteriovorus (strain ATCC 15356 / DSM 50701 / NCIMB 9529 / HD100), this protein is Large ribosomal subunit protein bL31B.